Consider the following 731-residue polypeptide: Actin filament-associated protein 1 (731 aa).

Met1 bears the N-acetylmethionine mark. A disordered region spans residues Val46 to Glu90. Over residues Pro59–Pro84 the composition is skewed to pro residues. Residues Pro70 to Trp73 carry the SH3-binding motif. The SH2-binding 1 motif lies at Tyr93 to Ala96. The disordered stretch occupies residues Gly118–His138. In terms of domain architecture, PH 1 spans Asp152–Ser248. Residues Gly252–Ser318 form a disordered region. A compositionally biased stretch (basic and acidic residues) spans Ala271–Ser284. Residues Ser283 and Ser284 each carry the phosphoserine modification. The PH 2 domain occupies Asp348–Gly442. Residues Tyr452–Val457 carry the SH2-binding 2 motif. A disordered region spans residues Ser511–Asn550. At Ser549 the chain carries Phosphoserine. Residues Lys558–Ala649 adopt a coiled-coil conformation. Positions Asp595–Thr638 are interaction with F-actin. The segment at Ala657–Thr731 is disordered. Phosphoserine is present on residues Ser665, Ser666, and Ser669. Thr676 bears the Phosphothreonine mark. A compositionally biased stretch (polar residues) spans Glu678–Thr687. Phosphoserine occurs at positions 680 and 688. The segment covering Lys721 to Thr731 has biased composition (basic and acidic residues).

As to quaternary structure, monomer and homomultimer. Interacts via its C-terminus with F-actin; probably involving AFAP1 multimers. Interacts with activated SRC SH3-SH2 domains. Interacts via its PH 1 domain with PRKCA, PRKCB and PRKCI. Phosphorylated on tyrosine residues. As to expression, widely expressed with highest levels in brain.

It localises to the cytoplasm. It is found in the cytoskeleton. The protein localises to the stress fiber. Can cross-link actin filaments into both network and bundle structures. May modulate changes in actin filament integrity and induce lamellipodia formation. May function as an adapter molecule that links other proteins, such as SRC and PKC to the actin cytoskeleton. This is Actin filament-associated protein 1 (Afap1) from Rattus norvegicus (Rat).